A 446-amino-acid chain; its full sequence is Iroquois homeobox protein 5a (446 aa).

A DNA-binding region (homeobox) is located at residues 117-173 (NATRDATATLKAWLNEHRKNPYPTKGEKIMLAIITKMTLTQVSTWFANARRRLKKEN). The tract at residues 175–312 (MTWTPRNRSE…IHSPPSAPKP (138 aa)) is disordered. A compositionally biased stretch (acidic residues) spans 184 to 201 (EDEEEDENIDLEKNDDDE). Basic and acidic residues-rich tracts occupy residues 202–220 (PNKPTDKGDSTDTEADHKL) and 227–258 (PCDRFKDETHSKDLDPPLTDSELKEAEERTDL). Polar residues-rich tracts occupy residues 264–274 (KPTTSSPSVLQ) and 293–303 (STGNSNVTSVI).

Belongs to the TALE/IRO homeobox family.

The protein localises to the nucleus. Functionally, transcription factor. Binds to consensus iroquois binding site (IBS) motifs 5'-ACANNTGT-3' or 5'-ACANNNTGT-3' in regulatory elements of target genes. Required, together with irx7, for hyoid joint formation; they act cell autonomously to repress expression of cartilage matrix genes, such as collagen col2a1a, within immature chondrocytes of the joint interzone. May compete with or modify Sox9a activity, thereby reducing Sox9a-mediated activation of col2a1a. Probably acts in the developing hyoid joint downstream of Bmp signaling. In concert with irx6a, plays a role in visual performance. This chain is Iroquois homeobox protein 5a (irx5a), found in Danio rerio (Zebrafish).